Reading from the N-terminus, the 619-residue chain is (-)-camphene synthase, chloroplastic (619 aa).

A chloroplast-targeting transit peptide spans 1–47 (MALVSVAPLVSMRRSLFSSPYELKSIDKTIPNLVMCRKRMSGTPSIR). 3 residues coordinate Mg(2+): Asp370, Asp374, and Asp522. Positions 370–374 (DDIYD) match the DDXXD motif motif.

Belongs to the terpene synthase family. Tpsd subfamily. The cofactor is Mg(2+). Mn(2+) serves as cofactor.

It is found in the plastid. The protein resides in the chloroplast. The enzyme catalyses (2E)-geranyl diphosphate = (1S,4R)-camphene + diphosphate. It carries out the reaction (2E)-geranyl diphosphate = (1R,5R)-alpha-pinene + diphosphate. It catalyses the reaction (2E)-geranyl diphosphate = tricyclene + diphosphate. The catalysed reaction is (2E)-geranyl diphosphate = beta-myrcene + diphosphate. The enzyme catalyses (2E)-geranyl diphosphate = (1S,5S)-beta-pinene + diphosphate. It carries out the reaction (2E)-geranyl diphosphate = (1S,5S)-alpha-pinene + diphosphate. It participates in terpene metabolism; oleoresin biosynthesis. It functions in the pathway secondary metabolite biosynthesis; terpenoid biosynthesis. Functionally, monoterpene synthase (TPS) involved in the biosynthesis of monoterpene natural products included in conifer oleoresin secretions and volatile emissions; these compounds contribute to biotic and abiotic stress defense against herbivores and pathogens. Catalyzes the conversion of (2E)-geranyl diphosphate (GPP) to (-)-camphene, (+)-alpha-pinene and (-)-alpha-pinene, and, to a lower extent, to tricyclene, myrcene and (-)-beta-pinene. The sequence is that of (-)-camphene synthase, chloroplastic from Pinus contorta (Shore pine).